The primary structure comprises 344 residues: uncharacterized protein (344 aa).

Residues 1–98 lie on the Cytoplasmic side of the membrane; it reads MIDFVKSRDT…NNDEIGIWNY (98 aa). A helical transmembrane segment spans residues 99–119; it reads ISVAEMGGVLLFLSYWIWTCL. His120 is a topological domain (lumenal). Residues 121 to 141 traverse the membrane as a helical segment; that stretch reads FSKIIFPAQKVICLYIFLFAL. The Cytoplasmic portion of the chain corresponds to 142 to 198; the sequence is NQTLQECIEEYVFSSECIKYRQFYSVYEIIDFLRTNFYRLFVIYCALGFGITRTVPK. Residues 199 to 219 form a helical membrane-spanning segment; that stretch reads YLMIKGISIVIALCSVYWISL. Residues 220–222 are Lumenal-facing; the sequence is YKD. The helical transmembrane segment at 223–243 threads the bilayer; the sequence is VYVVSEIFDMIQYEVSPAIWV. Residues 244-273 are Cytoplasmic-facing; it reads YSICHLLKQCTSVTTYENASKARFFRRMLN. The helical transmembrane segment at 274–294 threads the bilayer; the sequence is AFIFIFCASPMLHYLSNIIFG. Residues 295–344 lie on the Lumenal side of the membrane; that stretch reads NFDYRLSVIIGDLFTFMEKIAFPCYIMFPTHNEALAYNRNVAEEAQEKMI.

It belongs to the UPF0742 family.

The protein localises to the endoplasmic reticulum. The protein resides in the membrane. This is an uncharacterized protein from Schizosaccharomyces pombe (strain 972 / ATCC 24843) (Fission yeast).